The sequence spans 1208 residues: MKSLAGHVVKYGKHRERRSFARISEVLELPNLIEIQTDSYQWFLDEGLGEMFEDILPIDDFNGNLSLEFVDYELKEPKYTVAEARAHDANYSAPLHVTLRLTNRETGEIKAQEVFFGDFPLMTEQGTFIINGAERVIVSQLVRSPGVYFHGKVDKNGKEGFGSTVIPNRGAWLEMETSAKDISYVRIDRTRKIPLTVLVRALGFGSDDTIFEIFGDSETLRNTVEKDLHKNASDSRTEEGLKDVYERLRPGEPKTADSSRNLLNARFFDPKRYDLANVGRYKVNKKLDLKTRLLNLTLAETLVDPETGEIIVEKGTVLTHQVMETLAPFIDNGLNSVTYYPSEDGVVTDPMTVQVIKVFSPKDPEREVNVIGNGYPESAVKTVRPADIIASMSYFLNLMEGIGNVDDIDHLGNRRIRSVGELLQNQFRIGLARMERVVRERMSIQDTETLTPQQLINIRPVVASIKEFFGSSQLSQFMDQTNPLGELTHKRRLSALGPGGLTRDRAGYEVRDVHYSHYGRMCPIETPEGPNIGLINSLSSYAKVNKFGFIETPYRRVDRETGRVTDQIDYLTADIEDHYIVAQANSPLNEDGTFAQDVVMARAQSENLEVSIDKVDYMDVSPKQVVAVATACIPFLENDDSNRALMGANMQRQAVPLINPQAPWVGTGMEYKSAHDSGAALLCKHDGVVEFVDASEIRVRRDNGALDKYAVTKFRRSNSGTSYNQRPIVHLGEKVEKGDTLADGPSMEQGEMALGQNVLVGFMTWEGYNYEDAIIMSRRLVKDDVYTSIHIEEYESEARDTKLGPEEITREIPNVGEDALKDLDEMGIIRIGAEVQDGDLLVGKVTPKGVTELSAEERLLHAIFGEKAREVRDTSLRVPHGGGGIVHDVKIFTREAGDELSPGVNMLVRVYIVQKRKIHEGDKMAGRHGNKGVVSRIMPEEDMPFLPDGTPIDIMLNPLGVPSRMNIGQVLELHLGMAARQLGIHVATPVFDGASDEDVWETVREAGMASDAKTILYDGRTGEPFDGRVSVGVMYMIKLAHMVDDKLHARSIGPYSLVTQQPLGGKAQFGGQRFGEMEVWALEAYGAAYTLQEILTYKSDDVVGRVKTYEAIVKGEPIPKPGVPESFRVLVKELQSLGLDMRVLDIKDSEIQLRDMDDQDDDLITVNALTKFAEQQTAKELEKKAAEQVEDERQDIIQNFETAEDNLD.

It belongs to the RNA polymerase beta chain family. The RNAP catalytic core consists of 2 alpha, 1 beta, 1 beta' and 1 omega subunit. When a sigma factor is associated with the core the holoenzyme is formed, which can initiate transcription.

The catalysed reaction is RNA(n) + a ribonucleoside 5'-triphosphate = RNA(n+1) + diphosphate. DNA-dependent RNA polymerase catalyzes the transcription of DNA into RNA using the four ribonucleoside triphosphates as substrates. The sequence is that of DNA-directed RNA polymerase subunit beta from Enterococcus faecium (Streptococcus faecium).